A 657-amino-acid polypeptide reads, in one-letter code: Hemocyanin A chain (657 aa).

A disulfide bridge connects residues Cys-93 and Cys-98. Residue Asn-167 is glycosylated (N-linked (GlcNAc...) asparagine). Cu cation contacts are provided by His-194, His-198, His-224, His-344, His-348, and His-384. 2 cysteine pairs are disulfide-bonded: Cys-483/Cys-502 and Cys-562/Cys-609. A disordered region spans residues 594–616 (EGHNGGHDYGGTHAQCGVHGEAY).

It belongs to the tyrosinase family. Hemocyanin subfamily. Hexamer of a number of different chains, of which A, B, and C have been identified. As to expression, hemolymph.

The protein localises to the secreted. It localises to the extracellular space. Functionally, hemocyanins are copper-containing oxygen carriers occurring freely dissolved in the hemolymph of many mollusks and arthropods. This is Hemocyanin A chain from Panulirus interruptus (California spiny lobster).